Reading from the N-terminus, the 203-residue chain is LexA repressor (203 aa).

Positions 32-52 form a DNA-binding region, H-T-H motif; the sequence is RAEICTAFGFRSPNAAETHLR. Catalysis depends on for autocatalytic cleavage activity residues S121 and K158.

The protein belongs to the peptidase S24 family. In terms of assembly, homodimer.

It carries out the reaction Hydrolysis of Ala-|-Gly bond in repressor LexA.. Functionally, represses a number of genes involved in the response to DNA damage (SOS response), including recA and lexA. In the presence of single-stranded DNA, RecA interacts with LexA causing an autocatalytic cleavage which disrupts the DNA-binding part of LexA, leading to derepression of the SOS regulon and eventually DNA repair. This Aromatoleum aromaticum (strain DSM 19018 / LMG 30748 / EbN1) (Azoarcus sp. (strain EbN1)) protein is LexA repressor.